A 39-amino-acid polypeptide reads, in one-letter code: Bacteriocin lactococcin-G subunit alpha (39 aa).

As to quaternary structure, bacteriocin activity requires interaction of alpha and beta peptides in a molar ratio of 7:1 or 8:1 respectively.

Functionally, kills Lactococci. This Lactococcus lactis subsp. lactis (Streptococcus lactis) protein is Bacteriocin lactococcin-G subunit alpha.